The chain runs to 651 residues: Acetyl-coenzyme A synthetase (651 aa).

CoA contacts are provided by residues 193-196 (RRGK) and Thr312. ATP contacts are provided by residues 388-390 (GEP), 412-417 (DTWWQT), Asp501, and Arg516. Ser524 serves as a coordination point for CoA. Mg(2+) is bound by residues Val538, His540, and Val543. Residue Lys610 is modified to N6-acetyllysine.

This sequence belongs to the ATP-dependent AMP-binding enzyme family. Mg(2+) serves as cofactor. Acetylated. Deacetylation by the SIR2-homolog deacetylase activates the enzyme.

It catalyses the reaction acetate + ATP + CoA = acetyl-CoA + AMP + diphosphate. Functionally, catalyzes the conversion of acetate into acetyl-CoA (AcCoA), an essential intermediate at the junction of anabolic and catabolic pathways. AcsA undergoes a two-step reaction. In the first half reaction, AcsA combines acetate with ATP to form acetyl-adenylate (AcAMP) intermediate. In the second half reaction, it can then transfer the acetyl group from AcAMP to the sulfhydryl group of CoA, forming the product AcCoA. The polypeptide is Acetyl-coenzyme A synthetase (Streptomyces coelicolor (strain ATCC BAA-471 / A3(2) / M145)).